The primary structure comprises 350 residues: Solute carrier family 35 member E4 (350 aa).

A run of 8 helical transmembrane segments spans residues 40–60 (VLGQ…LLAG), 79–99 (PLLL…WGAQ), 110–130 (VLLL…GLST), 135–155 (LAQL…ALLL), 218–238 (VTLL…AALV), 258–278 (VLLS…LLAL), 279–299 (TSAL…LILS), and 301–321 (LLFG…TLSG). The region spanning 125–179 (NVGLSTVPLDLAQLATTTTPLFTLALSALLLGRRHHPLQFAAMGPLCLGAACSLA) is the EamA domain.

It belongs to the TPT transporter family. SLC35E subfamily.

It is found in the membrane. Putative transporter. This chain is Solute carrier family 35 member E4 (Slc35e4), found in Rattus norvegicus (Rat).